The sequence spans 212 residues: MEIACPDWSHESAAFAEGFTCIVGVDEVGRGPLAGPVTAAAVRLFPGRIPEGLNDSKKLPAARREALAAEILAVAEVSVAHASVEEIDRLNILQASHLAMARALAGLPCPPDFALIDGHLIPKGLAHRCRAIVKGDALCLSIAAASIVAKVARDRIMVDLEQQHPGYGWRTNAGYGTRDHLQALLNLGLTPHHRRSFKPVHNILYQEASVSP.

Residues 20–209 (TCIVGVDEVG…VHNILYQEAS (190 aa)) enclose the RNase H type-2 domain. A divalent metal cation is bound by residues D26, E27, and D117.

Belongs to the RNase HII family. Requires Mn(2+) as cofactor. The cofactor is Mg(2+).

It localises to the cytoplasm. The enzyme catalyses Endonucleolytic cleavage to 5'-phosphomonoester.. Functionally, endonuclease that specifically degrades the RNA of RNA-DNA hybrids. The sequence is that of Ribonuclease HII from Cereibacter sphaeroides (strain ATCC 17025 / ATH 2.4.3) (Rhodobacter sphaeroides).